The sequence spans 839 residues: DNA gyrase subunit A (839 aa).

The region spanning 46 to 510 is the Topo IIA-type catalytic domain; the sequence is LPDARDGLKP…ISEDIDDEDL (465 aa). Tyr-134 functions as the O-(5'-phospho-DNA)-tyrosine intermediate in the catalytic mechanism. The GyrA-box signature appears at 537-543; it reads QHRGGVG.

This sequence belongs to the type II topoisomerase GyrA/ParC subunit family. In terms of assembly, heterotetramer, composed of two GyrA and two GyrB chains. In the heterotetramer, GyrA contains the active site tyrosine that forms a transient covalent intermediate with DNA, while GyrB binds cofactors and catalyzes ATP hydrolysis.

Its subcellular location is the cytoplasm. The enzyme catalyses ATP-dependent breakage, passage and rejoining of double-stranded DNA.. In terms of biological role, a type II topoisomerase that negatively supercoils closed circular double-stranded (ds) DNA in an ATP-dependent manner to modulate DNA topology and maintain chromosomes in an underwound state. Negative supercoiling favors strand separation, and DNA replication, transcription, recombination and repair, all of which involve strand separation. Also able to catalyze the interconversion of other topological isomers of dsDNA rings, including catenanes and knotted rings. Type II topoisomerases break and join 2 DNA strands simultaneously in an ATP-dependent manner. This chain is DNA gyrase subunit A, found in Mycoplasma pneumoniae (strain ATCC 29342 / M129 / Subtype 1) (Mycoplasmoides pneumoniae).